Reading from the N-terminus, the 515-residue chain is 1-pyrroline-5-carboxylate dehydrogenase 1 (515 aa).

Active-site residues include Glu-286 and Cys-320.

Belongs to the aldehyde dehydrogenase family. RocA subfamily.

It catalyses the reaction L-glutamate 5-semialdehyde + NAD(+) + H2O = L-glutamate + NADH + 2 H(+). The protein operates within amino-acid degradation; L-proline degradation into L-glutamate; L-glutamate from L-proline: step 2/2. This Halalkalibacterium halodurans (strain ATCC BAA-125 / DSM 18197 / FERM 7344 / JCM 9153 / C-125) (Bacillus halodurans) protein is 1-pyrroline-5-carboxylate dehydrogenase 1 (rocA1).